Reading from the N-terminus, the 591-residue chain is V-type ATP synthase alpha chain (591 aa).

242–249 (GPFGAGKT) is an ATP binding site.

It belongs to the ATPase alpha/beta chains family.

It catalyses the reaction ATP + H2O + 4 H(+)(in) = ADP + phosphate + 5 H(+)(out). In terms of biological role, produces ATP from ADP in the presence of a proton gradient across the membrane. The V-type alpha chain is a catalytic subunit. The sequence is that of V-type ATP synthase alpha chain (atpA) from Chlamydia pneumoniae (Chlamydophila pneumoniae).